The following is an 801-amino-acid chain: Leucine--tRNA ligase (801 aa).

The short motif at 40–51 is the 'HIGH' region element; the sequence is PYPSGAGLHVGH. Positions 576-580 match the 'KMSKS' region motif; it reads KMSKS. ATP is bound at residue Lys579.

It belongs to the class-I aminoacyl-tRNA synthetase family.

The protein resides in the cytoplasm. The enzyme catalyses tRNA(Leu) + L-leucine + ATP = L-leucyl-tRNA(Leu) + AMP + diphosphate. This chain is Leucine--tRNA ligase, found in Exiguobacterium sibiricum (strain DSM 17290 / CCUG 55495 / CIP 109462 / JCM 13490 / 255-15).